Here is a 217-residue protein sequence, read N- to C-terminus: Peptide methionine sulfoxide reductase MsrA 1 (217 aa).

C57 is an active-site residue.

It belongs to the MsrA Met sulfoxide reductase family.

It carries out the reaction L-methionyl-[protein] + [thioredoxin]-disulfide + H2O = L-methionyl-(S)-S-oxide-[protein] + [thioredoxin]-dithiol. The catalysed reaction is [thioredoxin]-disulfide + L-methionine + H2O = L-methionine (S)-S-oxide + [thioredoxin]-dithiol. In terms of biological role, has an important function as a repair enzyme for proteins that have been inactivated by oxidation. Catalyzes the reversible oxidation-reduction of methionine sulfoxide in proteins to methionine. In Rhizobium meliloti (strain 1021) (Ensifer meliloti), this protein is Peptide methionine sulfoxide reductase MsrA 1 (msrA1).